The following is a 295-amino-acid chain: Probable phosphoglycerate mutase PMU1 (295 aa).

Catalysis depends on H61, which acts as the Tele-phosphohistidine intermediate. E170 serves as the catalytic Proton donor/acceptor.

The protein belongs to the phosphoglycerate mutase family.

It localises to the cytoplasm. Its subcellular location is the nucleus. In terms of biological role, probable phosphomutase that may have a function related to the manipulation of phosphate groups on carbohydrates. Reduces trehalose-6-phosphate levels when overexpressed in TPS2-deleted cells. Reduces 5'-Phosphoribosyl-4-carboxamide-5-aminoimidazole (AICAR) levels, a metabolic intermediate at the crossroads between AMP and histidine biosynthesis pathways, when overexpressed in a ADE3-ADE16-ADE17 triple deletant. In Saccharomyces cerevisiae (strain ATCC 204508 / S288c) (Baker's yeast), this protein is Probable phosphoglycerate mutase PMU1.